The sequence spans 641 residues: Chaperone protein DnaK (641 aa).

Threonine 200 carries the phosphothreonine; by autocatalysis modification. The segment covering 605–623 (AAEQGGSADAASGNAQASK) has biased composition (low complexity). Residues 605–627 (AAEQGGSADAASGNAQASKAADD) are disordered.

It belongs to the heat shock protein 70 family.

In terms of biological role, acts as a chaperone. This chain is Chaperone protein DnaK, found in Xanthomonas oryzae pv. oryzae (strain MAFF 311018).